We begin with the raw amino-acid sequence, 474 residues long: MNAVTDLKHDYLVADIKLADWGRKEIAIAETEMPGLMAIRDEFAASQPLKGARIAGSLHMTIQTAVLIETLKALGADVRWASCNIFSTQDHAAAAIAATGTPVFAFKGESLQEYWDFTHRIFEWADGGTPNMILDDGGDATLLLHLGAKAEKDVSVLAHPGSEEETFLFAAIKEKLAKDATFYSRNLDAIKGVTEETTTGVHRLYQMAQRGELRFPAINVNDSVTKSKFDNLYGCRESLVDGIKRATDVMIAGKVAIVAGYGDVGKGSAQALRALSAQVWVTEIDPICALQAAMEGYRVVTMDYAAEHGDIFVTCTGNYHVITHDHMAKMKDQAIVCNIGHFDNEIDIASVEKYQWEEIKPQVDHVIFPDGKKIIILAKGRLVNLGCATGHPSYVMSSSFANQTIAQIELWTEAVKGSNKYPVGVYTLPKHLDEKVARLQLKKLNAQLTELTDQQAAYIGVSKEGPYKADHYRY.

Substrate-binding residues include threonine 61, aspartate 136, and glutamate 196. Threonine 197–threonine 199 contributes to the NAD(+) binding site. Substrate contacts are provided by lysine 226 and aspartate 230. NAD(+) contacts are provided by residues asparagine 231, glycine 260–glycine 265, glutamate 283, asparagine 318, isoleucine 339–histidine 341, and asparagine 384.

This sequence belongs to the adenosylhomocysteinase family. The cofactor is NAD(+).

It localises to the cytoplasm. The catalysed reaction is S-adenosyl-L-homocysteine + H2O = L-homocysteine + adenosine. It functions in the pathway amino-acid biosynthesis; L-homocysteine biosynthesis; L-homocysteine from S-adenosyl-L-homocysteine: step 1/1. Functionally, may play a key role in the regulation of the intracellular concentration of adenosylhomocysteine. The protein is Adenosylhomocysteinase of Ralstonia pickettii (strain 12J).